A 332-amino-acid polypeptide reads, in one-letter code: Fe(3+) dicitrate transport system permease protein FecC (332 aa).

Residues 1 to 7 (MTAIKHP) are Cytoplasmic-facing. The helical transmembrane segment at 8–28 (VLLWGLPVAALIIIFWLSLFC) threads the bilayer. At 29–64 (YSAIPVSGADATRALLPGHTPTLPEALVQNLRLPRS) the chain is on the periplasmic side. Residues 65 to 85 (LVAVLIGASLALAGTLLQTLT) traverse the membrane as a helical segment. Residues 86 to 100 (HNPMASPSLLGINSG) are Cytoplasmic-facing. A helical transmembrane segment spans residues 101–121 (AALAMALTSALSPTPIAGYSL). A topological domain (periplasmic) is located at residue Ser122. Residues 123–143 (FIAACGGGVSWLLVMTAGGGF) form a helical membrane-spanning segment. Residues 144 to 151 (RHTHDRNK) are Cytoplasmic-facing. The chain crosses the membrane as a helical span at residues 152 to 172 (LILAGIALSAFCMGLTRITLL). At 173 to 199 (LAEDHAYGIFYWLAGGVSHARWQDVWQ) the chain is on the periplasmic side. The chain crosses the membrane as a helical span at residues 200–220 (LLPVVVTAVPVVLLLANQLNL). Residues 221 to 244 (LNLSDSTAHTLGVNLTRLRLVINM) lie on the Cytoplasmic side of the membrane. A helical membrane pass occupies residues 245 to 265 (LVLLLVGACVSVAGPVAFIGL). At 266–307 (LVPHLARFWAGFDQRNVLPVSMLLGATLMLLADVLARALAFP) the chain is on the periplasmic side. A helical transmembrane segment spans residues 308-328 (GDLPAGAVLALIGSPCFVWLV). The Cytoplasmic segment spans residues 329–332 (RRRG).

This sequence belongs to the binding-protein-dependent transport system permease family. FecCD subfamily. In terms of assembly, the complex is composed of two ATP-binding proteins (FecE), two transmembrane proteins (FecC and FecD) and a solute-binding protein (FecB). Interacts with FecB.

It localises to the cell inner membrane. Its function is as follows. Part of the ABC transporter complex FecBCDE involved in citrate-dependent Fe(3+) uptake. Probably responsible for the translocation of the substrate across the membrane. The protein is Fe(3+) dicitrate transport system permease protein FecC of Escherichia coli (strain K12).